Reading from the N-terminus, the 520-residue chain is Nuclear GTP-binding protein NUG1 (520 aa).

Basic residues-rich tracts occupy residues 1-13 (MRVR…RTST) and 21-34 (KKAS…KKMA). Residues 1–53 (MRVRKRQSRRTSTKLKEGIKKKASAHRKKEKKMAKKDVTWRSRSKKDPGIPSN) form a disordered region. Over residues 35-48 (KKDVTWRSRSKKDP) the composition is skewed to basic and acidic residues. The 179-residue stretch at 165–343 (YDKIFKSVID…ILDSPGICFP (179 aa)) folds into the CP-type G domain. Residues 213–216 (NKVD), 287–294 (GYPNVGKS), and 336–339 (DSPG) each bind GTP. At S337 the chain carries Phosphoserine.

It belongs to the TRAFAC class YlqF/YawG GTPase family.

The protein localises to the nucleus. In terms of biological role, GTPase required for 60S ribosomal subunit export to the cytoplasm. The polypeptide is Nuclear GTP-binding protein NUG1 (NUG1) (Saccharomyces cerevisiae (strain ATCC 204508 / S288c) (Baker's yeast)).